We begin with the raw amino-acid sequence, 577 residues long: MDRYEQVTELARRRGFMWPSFELYGGAAGFYDYGPLGARLKRRIEDIWRRFFVIGEGFAEIECPTIGIEEVFRASGHLSGFSDPLTECKECKEIYRADHLIKHIVEVPDALSAEEIYRMIKENDITCPECGGELSEVYEFNLMFRTAIGPGNRHPGYLRPETAQGMFINFQRLLRYYRDSLPFGAVQIGRSYRNEISPRQGVIRLREFSQAEAEVFIDPRNKQHPRFSEVKDLRLRLYSREAQERGQVEEMSVGEAVERGIIAHEILAYFVARTYEYLLAVGVDRERLRFRQHKADEMAHYAADCWDAEVLLDRLGWIEIVGIADRTDYDLRSHMALSKANLSVFVHYPEPVRRKRVAVKPDMKVLGPRFKGRAKAIADALQAMSVADLKGDTIKITVDGETYEIERRLVSVEEIEEEIRGEYVVPHVIEPSFGIDRILYTVLEHSYHEEPVEDEMRVVLRFLPGISPIDVAILPLMDKDELVEPARRIFDEFRRCGMLAEFDTSGSIGRRYRRNDEIGTPYCITVDYQTLEDGTVTVRDRDTMQQIRIEADRAVDIIRDLMSGALCFSEAGMPVKS.

Residues Arg96 and Glu161 each coordinate substrate. Residues 193 to 195, 203 to 208, 319 to 320, and 434 to 437 each bind ATP; these read RNE, IRLREF, EI, and GIDR. 208 to 212 contacts substrate; sequence FSQAE. 430-434 serves as a coordination point for substrate; sequence EPSFG.

Belongs to the class-II aminoacyl-tRNA synthetase family.

It is found in the cytoplasm. The enzyme catalyses tRNA(Gly) + glycine + ATP = glycyl-tRNA(Gly) + AMP + diphosphate. Catalyzes the attachment of glycine to tRNA(Gly). This Methanothrix thermoacetophila (strain DSM 6194 / JCM 14653 / NBRC 101360 / PT) (Methanosaeta thermophila) protein is Glycine--tRNA ligase.